A 221-amino-acid polypeptide reads, in one-letter code: MKKEKAVVVFSGGQDSTTCLFWAKKHFAEVEAVTFDYNQRHRLEIDVAASIAKELNVSHTVLDMSLLHQLAPNALTRSDIAIEQKEGQLPSTFVDGRNLLFLSFAAVLAKQKGARHLVTGVCETDFSGYPDCRDVFIKSLNVTLNLAMDYQFVIHTPLMWLNKAETWKLADELGALEFVRNKTLTCYNGIIADGCGECPACVLRKRGLDQYMNEKKGANVR.

Phenylalanine 10–leucine 20 contributes to the ATP binding site. The Zn(2+) site is built by cysteine 186, cysteine 195, cysteine 198, and cysteine 201.

Belongs to the QueC family. In terms of assembly, homodimer. It depends on Zn(2+) as a cofactor.

The catalysed reaction is 7-carboxy-7-deazaguanine + NH4(+) + ATP = 7-cyano-7-deazaguanine + ADP + phosphate + H2O + H(+). The protein operates within purine metabolism; 7-cyano-7-deazaguanine biosynthesis. Catalyzes the ATP-dependent conversion of 7-carboxy-7-deazaguanine (CDG) to 7-cyano-7-deazaguanine (preQ(0)). The chain is 7-cyano-7-deazaguanine synthase from Anoxybacillus flavithermus (strain DSM 21510 / WK1).